The sequence spans 184 residues: Photosystem I assembly protein Ycf4 (184 aa).

2 helical membrane-spanning segments follow: residues 22–42 (FCWA…GTSS) and 57–77 (IIFF…LFIS).

This sequence belongs to the Ycf4 family.

It is found in the plastid. The protein localises to the chloroplast thylakoid membrane. Its function is as follows. Seems to be required for the assembly of the photosystem I complex. The chain is Photosystem I assembly protein Ycf4 from Crucihimalaya wallichii (Rock-cress).